The following is a 130-amino-acid chain: Secreted RxLR effector protein 66 (130 aa).

The N-terminal stretch at 1–21 (MHLRLLMSTVITATLIVSNNA) is a signal peptide. The RxLR-dEER signature appears at 32–62 (RALRGASTVGIAADNLLAAHFSPTLKHKESR). Residues 104-124 (GPAIAIFAGVAATFILIDYLI) form a helical membrane-spanning segment.

It belongs to the RxLR effector family.

The protein localises to the secreted. Its subcellular location is the host cytoplasm. It localises to the host nucleus. The protein resides in the membrane. Its function is as follows. Effector that acts as a broad suppressor of cell death to interrupt plant immunity. Inhibits cell death induced by cell death-inducing proteins, including the PAMP elicitor INF1 from P.infestans. The chain is Secreted RxLR effector protein 66 from Plasmopara viticola (Downy mildew of grapevine).